A 198-amino-acid polypeptide reads, in one-letter code: Cytokinin riboside 5'-monophosphate phosphoribohydrolase (198 aa).

Substrate contacts are provided by residues E91, 109–110 (RK), 126–132 (GVGTAEE), and T138.

This sequence belongs to the LOG family.

It catalyses the reaction N(6)-(dimethylallyl)adenosine 5'-phosphate + H2O = N(6)-dimethylallyladenine + D-ribose 5-phosphate. The catalysed reaction is 9-ribosyl-trans-zeatin 5'-phosphate + H2O = trans-zeatin + D-ribose 5-phosphate. Functionally, catalyzes the hydrolytic removal of ribose 5'-monophosphate from nitrogen N6-modified adenosines, the final step of bioactive cytokinin synthesis. The polypeptide is Cytokinin riboside 5'-monophosphate phosphoribohydrolase (fas6) (Rhodococcoides fascians (Rhodococcus fascians)).